The primary structure comprises 500 residues: Lysine--tRNA ligase (500 aa).

Glu411 and Glu418 together coordinate Mg(2+).

It belongs to the class-II aminoacyl-tRNA synthetase family. In terms of assembly, homodimer. Mg(2+) is required as a cofactor.

The protein resides in the cytoplasm. The enzyme catalyses tRNA(Lys) + L-lysine + ATP = L-lysyl-tRNA(Lys) + AMP + diphosphate. This is Lysine--tRNA ligase from Actinobacillus pleuropneumoniae serotype 7 (strain AP76).